The chain runs to 155 residues: Ribosome maturation factor RimP (155 aa).

This sequence belongs to the RimP family.

Its subcellular location is the cytoplasm. Functionally, required for maturation of 30S ribosomal subunits. In Staphylococcus carnosus (strain TM300), this protein is Ribosome maturation factor RimP.